Consider the following 241-residue polypeptide: Tumor necrosis factor receptor superfamily member grnd (241 aa).

The signal sequence occupies residues 1–27 (MSVRKLSALSLSIGGVPLIPSVSLVAA). Residues 28-98 (ANGESRDCHG…EMLDIQNTQQ (71 aa)) lie on the Extracellular side of the membrane. 4 disulfides stabilise this stretch: Cys35–Cys47, Cys40–Cys54, Cys57–Cys77, and Cys61–Cys73. N-linked (GlcNAc...) asparagine glycosylation is present at Asn63. Residues 99–119 (LILLLLTILLVLIALRCAFQF) traverse the membrane as a helical segment. At 120–241 (LRWLIGNRCF…PSAATIPVAF (122 aa)) the chain is on the cytoplasmic side.

Interacts (via extracellular cysteine-rich domain) with egr (via secreted TNF-homology soluble form); forms heterohexamers when 3 copies associate with egr trimers. Interacts with Traf6/TRAF2 and veli (via PDZ domain). In terms of processing, N-glycosylated on Asn-63. Glycosylation regulates ligand binding, specifically reducing affinity for the TNF egr, thereby inhibiting activation of JNK signaling. Expressed in the adult midgut; under normal conditions expressed at lower levels than the other TNF receptor wgn.

The protein resides in the apical cell membrane. Its subcellular location is the cytoplasmic vesicle membrane. In terms of biological role, acts as a receptor for TNF-cytokine egr. Plays a role in activation of JNK signaling and is required for egr-induced apoptosis, including in wing imaginal discs during development. May also play an egr-independent role in cell proliferation. TNF receptor involved in triggering JNK-dependent proliferation of the enteroblast-enterocyte lineage in response to stress-induced release of egr by intestinal stem cells and enteroblasts. Involved in regulation of insulin production in response to dietary protein shortage keeping systemic growth in check. Activation in brain insulin producing cells through binding of egr released into the hemolymph in response to dietary amino acid shortage, results in JNK-dependent inhibition of insulin production. This is Tumor necrosis factor receptor superfamily member grnd from Drosophila melanogaster (Fruit fly).